The following is a 253-amino-acid chain: Prepilin leader peptidase/N-methyltransferase (253 aa).

Residues 4–24 (VYLILFSIVSLILGSFSNVVI) traverse the membrane as a helical segment. The Zn(2+) site is built by C48, C51, C73, and C76. The next 6 helical transmembrane spans lie at 80–100 (ISLS…PIYW), 106–126 (VDSF…VIDF), 129–149 (MLLP…YVQQ), 159–179 (IIGG…VRLF), 198–218 (TLIG…IAFI), and 230–250 (CLYI…FFSI).

The protein belongs to the peptidase A24 family. It depends on Zn(2+) as a cofactor.

It localises to the cell inner membrane. The catalysed reaction is Typically cleaves a -Gly-|-Phe- bond to release an N-terminal, basic peptide of 5-8 residues from type IV prepilin, and then N-methylates the new N-terminal amino group, the methyl donor being S-adenosyl-L-methionine.. In terms of biological role, plays an essential role in type IV pili and type II pseudopili formation by proteolytically removing the leader sequence from substrate proteins and subsequently monomethylating the alpha-amino group of the newly exposed N-terminal phenylalanine. The polypeptide is Prepilin leader peptidase/N-methyltransferase (tcpJ) (Vibrio cholerae serotype O1 (strain ATCC 39315 / El Tor Inaba N16961)).